A 758-amino-acid polypeptide reads, in one-letter code: General transcription and DNA repair factor IIH helicase subunit XPD (758 aa).

Residues 7–285 (DVTVYFPYDN…TDAGRLRAEY (279 aa)) enclose the Helicase ATP-binding domain. An ATP-binding site is contributed by 42–49 (MPTGTGKT). 4 residues coordinate [4Fe-4S] cluster: C116, C134, C155, and C190. Residues 234 to 238 (DEAHN) carry the DEAH box motif.

The protein belongs to the helicase family. RAD3/XPD subfamily. In terms of assembly, component of the 7-subunit TFIIH core complex composed of XPB, XPD, TFB1/GTF2H1, GTF2H2/P44, TFB4/GTF2H3, TFB2/GTF2H4 and TFB5/GTF2H5, which is active in NER. The core complex associates with the 3-subunit CDK-activating kinase (CAK) module composed of CYCH1/cyclin H1, CDKD and MAT1/At4g30820 to form the 10-subunit holoenzyme (holo-TFIIH) active in transcription. Interacts with GTF2H2/p44. [4Fe-4S] cluster serves as cofactor. As to expression, expressed at low levels in all tissues.

Its subcellular location is the nucleus. It carries out the reaction Couples ATP hydrolysis with the unwinding of duplex DNA at the replication fork by translocating in the 5'-3' direction. This creates two antiparallel DNA single strands (ssDNA). The leading ssDNA polymer is the template for DNA polymerase III holoenzyme which synthesizes a continuous strand.. It catalyses the reaction ATP + H2O = ADP + phosphate + H(+). Functionally, ATP-dependent 5'-3' DNA helicase, component of the general transcription and DNA repair factor IIH (TFIIH) core complex, which is involved in general and transcription-coupled nucleotide excision repair (NER) of damaged DNA and, when complexed to CDK-activating kinase (CAK), involved in transcription by RNA polymerase II. In NER, TFIIH acts by opening DNA around the lesion to allow the excision of the damaged oligonucleotide and its replacement by a new DNA fragment. The ATP-dependent helicase activity of XPD is required for DNA opening. In transcription, TFIIH has an essential role in transcription initiation. When the pre-initiation complex (PIC) has been established, TFIIH is required for promoter opening and promoter escape. Phosphorylation of the C-terminal tail (CTD) of the largest subunit of RNA polymerase II by the kinase module CAK controls the initiation of transcription. XPD acts by forming a bridge between CAK and the core-TFIIH complex. Essential during plant growth. May negatively regulate a common response program mediated by UV damage and heat stress, that leads to tissue death and reduced chloroplast function. The sequence is that of General transcription and DNA repair factor IIH helicase subunit XPD from Arabidopsis thaliana (Mouse-ear cress).